Reading from the N-terminus, the 308-residue chain is Putative transposon Ty5-1 protein YCL074W (308 aa).

The sequence is that of Putative transposon Ty5-1 protein YCL074W (TY5A) from Saccharomyces cerevisiae (strain ATCC 204508 / S288c) (Baker's yeast).